The following is a 343-amino-acid chain: Protein RecA (343 aa).

Residue 66–73 (GPESSGKT) participates in ATP binding.

The protein belongs to the RecA family.

It is found in the cytoplasm. Its function is as follows. Can catalyze the hydrolysis of ATP in the presence of single-stranded DNA, the ATP-dependent uptake of single-stranded DNA by duplex DNA, and the ATP-dependent hybridization of homologous single-stranded DNAs. It interacts with LexA causing its activation and leading to its autocatalytic cleavage. This chain is Protein RecA, found in Rickettsia conorii (strain ATCC VR-613 / Malish 7).